We begin with the raw amino-acid sequence, 1073 residues long: TSC22 domain family protein 1 (1073 aa).

The tract at residues 1–98 is required for interaction with TGFBR1 and promotion of TGF-beta signaling; it reads MHQPPESTAA…SQAQLQAQPL (98 aa). 6 disordered regions span residues 22–110, 125–205, 220–288, 458–486, 607–628, and 742–766; these read MAHP…KKSG, ISSN…PHLP, LHHH…SPAS, VTSE…SVGS, YSQA…QQLQ, and VQQP…QVVP. Positions 36–45 are enriched in low complexity; that stretch reads GSASALNAAG. The segment covering 58-70 has biased composition (pro residues); sequence FPPPSLLQPPPPA. Over residues 84–100 the composition is skewed to low complexity; the sequence is SLNLLSQAQLQAQPLAP. Residues 133–142 show a composition bias toward acidic residues; sequence EDTESYDDLD. Basic residues predominate over residues 220 to 240; that stretch reads LHHHHQIHHGHHLQHGHHHPS. The segment covering 257 to 271 has biased composition (polar residues); that stretch reads PVSRKLSTTGSSDSI. Ser263 carries the post-translational modification Phosphoserine. Composition is skewed to low complexity over residues 272 to 288 and 465 to 483; these read TPVA…SPAS and TSGS…YTES. Over residues 614–625 the composition is skewed to pro residues; the sequence is VQTPLPGAPPPQ. The segment covering 742–764 has biased composition (polar residues); that stretch reads VQQPSTQVPPSVIQQGAPPSSQV. The interval 1006–1027 is leucine-zipper; that stretch reads LKEQIKELIEKNSQLEQENNLL. The tract at residues 1037 to 1073 is disordered; it reads AQFQAQLQTGSPPATTQPQGTTQPPAQPASQGSGPTA. The span at 1044–1073 shows a compositional bias: low complexity; that stretch reads QTGSPPATTQPQGTTQPPAQPASQGSGPTA.

This sequence belongs to the TSC-22/Dip/Bun family. In terms of assembly, forms homodimers. Forms heterodimers. Component of a complex composed of TSC22D1 (via N-terminus), TGFBR1 and TGFBR2; the interaction between TSC22D1 and TGFBR1 is inhibited by SMAD7 and promoted by TGFB1. Interacts with SMAD7; the interaction requires TGF-beta and the interaction is inhibited by TGFBR1. Interacts with TPT1/fortilin; interaction results in the destabilization of TSC22D1 protein and prevents TSC22D1-mediated apoptosis. Interacts with SMAD4 (via N-terminus). Interacts with ACVRL1/ALK1, ACVR1/ALK2, BMPR1A/ALK3, ACVR1B/ALK4, BMPR1B/ALK6, ACVR2A/ACTRII, and BMPR2. Interacts with SMAD6. Interacts with TFE3; the interaction is enhanced in the presence of TGF-beta. Forms a heterodimer with TSC22D4/THG1. As to quaternary structure, forms a heterodimer with TSC22D4/THG1. Interacts with histone H1-2. Interacts with GNL3. In terms of assembly, interacts with histone H1-2. Ubiquitously expressed in adult tissues. Expressed in the postmitotic epithelial compartment at the top of intestinal mucosal villi.

The protein resides in the cytoplasm. Its subcellular location is the nucleus. It localises to the cell membrane. It is found in the mitochondrion. In terms of biological role, transcriptional repressor. Acts on the C-type natriuretic peptide (CNP) promoter. Acts to promote CASP3-mediated apoptosis. Positively regulates TGF-beta signaling by interacting with SMAD7 which inhibits binding of SMAD7 to TGFBR1, preventing recruitment of SMURF ubiquitin ligases to TGFBR1 and inhibiting SMURF-mediated ubiquitination and degradation of TGFBR1. Contributes to enhancement of TGF-beta signaling by binding to and modulating the transcription activator activity of SMAD4. Promotes TGF-beta-induced transcription of COL1A2; via its interaction with TFE3 at E-boxes in the gene proximal promoter. Plays a role in the repression of hematopoietic precursor cell growth. Promotes IL2 deprivation-induced apoptosis in T-lymphocytes, via repression of TSC22D3/GILZ transcription and activation of the caspase cascade. Its function is as follows. May act to negatively regulate TGFB3 signaling and thereby inhibit cell death in mammary gland cells. Positively regulates cell death in response to TGFB3 during mammary gland involution. In Homo sapiens (Human), this protein is TSC22 domain family protein 1.